A 564-amino-acid polypeptide reads, in one-letter code: Dihydroxy-acid dehydratase (564 aa).

[2Fe-2S] cluster is bound at residue cysteine 55. Aspartate 87 is a Mg(2+) binding site. Cysteine 128 is a [2Fe-2S] cluster binding site. Residues aspartate 129 and lysine 130 each contribute to the Mg(2+) site. The residue at position 130 (lysine 130) is an N6-carboxylysine. Cysteine 200 contributes to the [2Fe-2S] cluster binding site. Glutamate 452 provides a ligand contact to Mg(2+). Serine 478 acts as the Proton acceptor in catalysis.

This sequence belongs to the IlvD/Edd family. Homodimer. It depends on [2Fe-2S] cluster as a cofactor. Mg(2+) serves as cofactor.

The enzyme catalyses (2R)-2,3-dihydroxy-3-methylbutanoate = 3-methyl-2-oxobutanoate + H2O. It catalyses the reaction (2R,3R)-2,3-dihydroxy-3-methylpentanoate = (S)-3-methyl-2-oxopentanoate + H2O. It participates in amino-acid biosynthesis; L-isoleucine biosynthesis; L-isoleucine from 2-oxobutanoate: step 3/4. Its pathway is amino-acid biosynthesis; L-valine biosynthesis; L-valine from pyruvate: step 3/4. Its function is as follows. Functions in the biosynthesis of branched-chain amino acids. Catalyzes the dehydration of (2R,3R)-2,3-dihydroxy-3-methylpentanoate (2,3-dihydroxy-3-methylvalerate) into 2-oxo-3-methylpentanoate (2-oxo-3-methylvalerate) and of (2R)-2,3-dihydroxy-3-methylbutanoate (2,3-dihydroxyisovalerate) into 2-oxo-3-methylbutanoate (2-oxoisovalerate), the penultimate precursor to L-isoleucine and L-valine, respectively. This chain is Dihydroxy-acid dehydratase, found in Albidiferax ferrireducens (strain ATCC BAA-621 / DSM 15236 / T118) (Rhodoferax ferrireducens).